A 390-amino-acid chain; its full sequence is Succinate--CoA ligase [ADP-forming] subunit beta (390 aa).

An ATP-grasp domain is found at 9-245 (KHLLKKYNIP…TTQEDEHETM (237 aa)). ATP is bound by residues K46, 53-55 (GRG), E99, S102, and E107. Mg(2+) contacts are provided by N200 and D214. Substrate-binding positions include N265 and 322–324 (GIV).

This sequence belongs to the succinate/malate CoA ligase beta subunit family. Heterotetramer of two alpha and two beta subunits. Mg(2+) serves as cofactor.

It carries out the reaction succinate + ATP + CoA = succinyl-CoA + ADP + phosphate. It catalyses the reaction GTP + succinate + CoA = succinyl-CoA + GDP + phosphate. It functions in the pathway carbohydrate metabolism; tricarboxylic acid cycle; succinate from succinyl-CoA (ligase route): step 1/1. Its function is as follows. Succinyl-CoA synthetase functions in the citric acid cycle (TCA), coupling the hydrolysis of succinyl-CoA to the synthesis of either ATP or GTP and thus represents the only step of substrate-level phosphorylation in the TCA. The beta subunit provides nucleotide specificity of the enzyme and binds the substrate succinate, while the binding sites for coenzyme A and phosphate are found in the alpha subunit. This chain is Succinate--CoA ligase [ADP-forming] subunit beta, found in Coxiella burnetii (strain CbuG_Q212) (Coxiella burnetii (strain Q212)).